A 336-amino-acid polypeptide reads, in one-letter code: MAENQEVYDVTIIGGGPIGLFTAFYCGMRELKTKVIEFLPKLGGKVSLFFPEKIIRDIGGIPGIAGKQLIEQLKEQAATFDPDIVLNQRVTGFERLDDGTIVLTGSEGKKHYTRTVILACGMGTLEVNEFDSEDAARYAGKNLHYGVEKLDAFKGKRVVISGGGDTAVDWANELEPIAASVTVVHRREEFGGMESSVTKMKQSSVRVLTPYRLEQLNGDEEGIKSVTVCHTESGQRKDIEIDELIINHGFKIDLGPMMEWGLEIEEGRVKADRHMRTNLPGVFVAGDAAFYESKLRLIAGGFTEGPTAVNSAKAYLDPKAENMAMYSTHHKKLVHK.

FAD is bound by residues Glu37, Lys45, Phe50, Val90, Leu125, Asp287, and Thr328.

The protein belongs to the ferredoxin--NADP reductase type 2 family. Homodimer. FAD is required as a cofactor.

It catalyses the reaction 2 reduced [2Fe-2S]-[ferredoxin] + NADP(+) + H(+) = 2 oxidized [2Fe-2S]-[ferredoxin] + NADPH. This Bacillus subtilis (strain 168) protein is Ferredoxin--NADP reductase 1 (ycgT).